The sequence spans 65 residues: MPKIKTNRGAAKRFRKTGSGKIRRNKAFTSHILTKKSTKRKRELRQGTLVAKADQKNISRLIPYI.

The interval 1–28 (MPKIKTNRGAAKRFRKTGSGKIRRNKAF) is disordered. A compositionally biased stretch (basic residues) spans 10 to 26 (AAKRFRKTGSGKIRRNK).

It belongs to the bacterial ribosomal protein bL35 family.

This Syntrophotalea carbinolica (strain DSM 2380 / NBRC 103641 / GraBd1) (Pelobacter carbinolicus) protein is Large ribosomal subunit protein bL35.